Here is a 215-residue protein sequence, read N- to C-terminus: Ribose-5-phosphate isomerase A (215 aa).

Residues 26 to 29 (TGST), 79 to 82 (DGAD), and 92 to 95 (KGGG) contribute to the substrate site. Glu101 (proton acceptor) is an active-site residue. Lys119 is a binding site for substrate.

Belongs to the ribose 5-phosphate isomerase family. Homodimer.

The catalysed reaction is aldehydo-D-ribose 5-phosphate = D-ribulose 5-phosphate. The protein operates within carbohydrate degradation; pentose phosphate pathway; D-ribose 5-phosphate from D-ribulose 5-phosphate (non-oxidative stage): step 1/1. Its function is as follows. Catalyzes the reversible conversion of ribose-5-phosphate to ribulose 5-phosphate. The polypeptide is Ribose-5-phosphate isomerase A (Xylella fastidiosa (strain M12)).